A 474-amino-acid chain; its full sequence is tRNA-2-methylthio-N(6)-dimethylallyladenosine synthase (474 aa).

The 118-residue stretch at 3-120 folds into the MTTase N-terminal domain; that stretch reads KKLHIKTWGC…LPDMIEQVRR (118 aa). Cysteine 12, cysteine 49, cysteine 83, cysteine 157, cysteine 161, and cysteine 164 together coordinate [4Fe-4S] cluster. In terms of domain architecture, Radical SAM core spans 143-375; the sequence is RAEGPTAFVS…QDRITQQAMR (233 aa). The TRAM domain occupies 378 to 441; sequence RHMMGTVQRI…TNSLRGKFIR (64 aa).

The protein belongs to the methylthiotransferase family. MiaB subfamily. Monomer. Requires [4Fe-4S] cluster as cofactor.

It localises to the cytoplasm. It carries out the reaction N(6)-dimethylallyladenosine(37) in tRNA + (sulfur carrier)-SH + AH2 + 2 S-adenosyl-L-methionine = 2-methylsulfanyl-N(6)-dimethylallyladenosine(37) in tRNA + (sulfur carrier)-H + 5'-deoxyadenosine + L-methionine + A + S-adenosyl-L-homocysteine + 2 H(+). Catalyzes the methylthiolation of N6-(dimethylallyl)adenosine (i(6)A), leading to the formation of 2-methylthio-N6-(dimethylallyl)adenosine (ms(2)i(6)A) at position 37 in tRNAs that read codons beginning with uridine. The sequence is that of tRNA-2-methylthio-N(6)-dimethylallyladenosine synthase from Shewanella sp. (strain W3-18-1).